We begin with the raw amino-acid sequence, 453 residues long: O-glucose prenyltransferase PaPT (453 aa).

Residue 95 to 96 (AP) participates in L-tryptophan binding. The substrate site is built by lysine 210, tyrosine 212, arginine 279, lysine 281, tyrosine 283, tyrosine 368, and tyrosine 435.

This sequence belongs to the tryptophan dimethylallyltransferase family.

The protein operates within mycotoxin biosynthesis. In terms of biological role, O-glucose prenyltransferase; part of the 2 gene clusters that mediate the biosynthesis of fusicoccins, diterpene glucosides that display phytohormone-like activity and function as potent activators of plasma membrane H(+)-ATPases in plants by modifying 14-3-3 proteins and cause the plant disease constriction canker. The first step in the pathway is performed by the fusicoccadiene synthase PaFS that possesses both prenyl transferase and terpene cyclase activity, converting isopentenyl diphosphate and dimethylallyl diphosphate into geranylgeranyl diphosphate (GGDP) and successively converting GGDP into fusicocca-2,10(14)-diene, a precursor for fusicoccin H. The second step is the oxidation at the C-8 position by the cytochrome P450 monooxygenase PaP450-2 to yield fusicocca-2,10(14)-diene-8-beta-ol. The cytochrome P450 monooxygenase PaP450-1 then catalyzes the hydroxylation at the C-16 position to produce fusicocca-2,10(14)-diene-8-beta,16-diol. The dioxygenase fc-dox then catalyzes the 16-oxydation of fusicocca-2,10(14)-diene-8-beta,16-diol to yield an aldehyde (8-beta-hydroxyfusicocca-1,10(14)-dien-16-al). The short-chain dehydrogenase/reductase fc-sdr catalyzes the reduction of the aldehyde to yield fusicocca-1,10(14)-diene-8-beta,16-diol. The next step is the hydroxylation at C-9 performed by the cytochrome P450 monooxygenase PaP450-3 that leads to fusicoccin H aglycon which is glycosylated to fusicoccin H by the O-glycosyltransferase PaGT. Hydroxylation at C-12 by the cytochrome P450 monooxygenase PaP450-4 leads then to the production of fusicoccin Q and is followed by methylation by the O-methyltransferase PaMT to yield fusicoccin P. Fusicoccin P is further converted to fusicoccin J via prenylation by the O-glucose prenyltransferase PaPT. Cytochrome P450 monooxygenase PaP450-5 then performs hydroxylation at C-19 to yield dideacetyl-fusicoccin A which is acetylated to 3'-O-deacetyl-fusicoccin A by the O-acetyltransferase PaAT-2. Finally, a another acetylation by the O-acetyltransferase PaAT-1 yields fusicoccin A. The sequence is that of O-glucose prenyltransferase PaPT from Phomopsis amygdali (Fusicoccum amygdali).